The primary structure comprises 298 residues: Homoserine kinase (298 aa).

79-89 (PIARGLGSSGA) contacts ATP.

This sequence belongs to the GHMP kinase family. Homoserine kinase subfamily.

The protein resides in the cytoplasm. The catalysed reaction is L-homoserine + ATP = O-phospho-L-homoserine + ADP + H(+). The protein operates within amino-acid biosynthesis; L-threonine biosynthesis; L-threonine from L-aspartate: step 4/5. In terms of biological role, catalyzes the ATP-dependent phosphorylation of L-homoserine to L-homoserine phosphate. The sequence is that of Homoserine kinase from Pyrobaculum islandicum (strain DSM 4184 / JCM 9189 / GEO3).